Here is a 388-residue protein sequence, read N- to C-terminus: Type II secretion system protein F (388 aa).

The tract at residues 1–28 (MTEGDSARQVRQQLREQGLTPLEVNETT) is disordered. Residues 1–153 (MTEGDSARQV…HMRTKLLQAM (153 aa)) lie on the Cytoplasmic side of the membrane. E79, N133, and D137 together coordinate Ca(2+). Residues 154–174 (IYPIVLTLVAVGVISILLTAV) form a helical membrane-spanning segment. At 175-205 (VPKVVAQFEHMGQQLPATTRFLIGTSELMQH) the chain is on the periplasmic side. The helical transmembrane segment at 206 to 226 (YGLWFLLLLFIGGFVWRWWLT) threads the bilayer. Residues 227 to 350 (DEKRRRHWHQ…QDREFETQVN (124 aa)) are Cytoplasmic-facing. Residues 351–371 (IALGVFEPLLVVSMAGVVLFI) form a helical membrane-spanning segment. The Periplasmic portion of the chain corresponds to 372 to 388 (VMSILQPILELNNMVNL).

Belongs to the GSP F family. As to quaternary structure, type II secretion system is composed of four main components: the outer membrane complex, the inner membrane complex, the cytoplasmic secretion ATPase and the periplasm-spanning pseudopilus. Homodimer. Interacts with ExeE and ExeL components.

The protein resides in the cell inner membrane. Component of the type II secretion system inner membrane complex required for the energy-dependent secretion of extracellular factors such as proteases and toxins from the periplasm. This Aeromonas hydrophila protein is Type II secretion system protein F (exeF).